A 708-amino-acid chain; its full sequence is ATP-dependent DNA helicase Hel308 (708 aa).

The short motif at 1–29 (MSIDDLKLPSNVIDIIKNRGIKKLNPPQT) is the Q motif element. ATP-binding positions include glutamine 28 and 46-53 (SPTGSGKT). In terms of domain architecture, Helicase ATP-binding spans 33-196 (KKGLLDGNRL…WLGAEPVATN (164 aa)). Positions 145–148 (DELH) match the DEAH box motif. The region spanning 229–435 (HGDDAIIAYT…ERAFYTFLLG (207 aa)) is the Helicase C-terminal domain.

The protein belongs to the helicase family. Hel308 subfamily. Monomer.

The catalysed reaction is Couples ATP hydrolysis with the unwinding of duplex DNA by translocating in the 3'-5' direction.. The enzyme catalyses ATP + H2O = ADP + phosphate + H(+). Functionally, DNA-dependent ATPase and 3'-5' DNA helicase that may be involved in repair of stalled replication forks. The chain is ATP-dependent DNA helicase Hel308 from Saccharolobus solfataricus (strain ATCC 35092 / DSM 1617 / JCM 11322 / P2) (Sulfolobus solfataricus).